We begin with the raw amino-acid sequence, 374 residues long: Type II methyltransferase M.NgoFVII (374 aa).

The 329-residue stretch at 16-344 (PKILSLFSGC…KSILPIFSDN (329 aa)) folds into the SAM-dependent MTase C5-type domain. The active site involves C88.

Belongs to the class I-like SAM-binding methyltransferase superfamily. C5-methyltransferase family.

The enzyme catalyses a 2'-deoxycytidine in DNA + S-adenosyl-L-methionine = a 5-methyl-2'-deoxycytidine in DNA + S-adenosyl-L-homocysteine + H(+). Functionally, a methylase, recognizes the double-stranded sequence 5'-GCSGC-3', methylates C-5 on both strands, and protects the DNA from cleavage by the NgoFVII endonuclease. This is Type II methyltransferase M.NgoFVII (ngoFVIIM) from Neisseria gonorrhoeae.